The chain runs to 209 residues: Tektin bundle-interacting protein 1 (209 aa).

Microtubule inner protein component of sperm flagellar doublet microtubules.

The protein resides in the cytoplasm. It is found in the cytoskeleton. It localises to the cilium axoneme. The protein localises to the flagellum axoneme. Microtubule inner protein (MIP) part of the dynein-decorated doublet microtubules (DMTs) in cilia axoneme, which is required for motile cilia beating. Located at the center of the tektin bundle where may function to recruit tektins or stabilize the bundle. In Homo sapiens (Human), this protein is Tektin bundle-interacting protein 1.